Here is a 98-residue protein sequence, read N- to C-terminus: Ubiquitin-related modifier 1 (98 aa).

G98 is subject to 1-thioglycine. Residue G98 forms a Glycyl lysine isopeptide (Gly-Lys) (interchain with K-? in acceptor proteins) linkage.

The protein belongs to the URM1 family. Post-translationally, C-terminal thiocarboxylation occurs in 2 steps, it is first acyl-adenylated (-COAMP) via the hesA/moeB/thiF part of UBA4, then thiocarboxylated (-COSH) via the rhodanese domain of UBA4.

It localises to the cytoplasm. Its pathway is tRNA modification; 5-methoxycarbonylmethyl-2-thiouridine-tRNA biosynthesis. Its function is as follows. Acts as a sulfur carrier required for 2-thiolation of mcm(5)S(2)U at tRNA wobble positions of cytosolic tRNA(Lys), tRNA(Glu) and tRNA(Gln). Serves as sulfur donor in tRNA 2-thiolation reaction by being thiocarboxylated (-COSH) at its C-terminus by the MOCS3 homolog UBA4. The sulfur is then transferred to tRNA to form 2-thiolation of mcm(5)S(2)U. Prior mcm(5) tRNA modification by the elongator complex is required for 2-thiolation. Also acts as a ubiquitin-like protein (UBL) that is covalently conjugated via an isopeptide bond to lysine residues of target proteins such as AHP1. The thiocarboxylated form serves as substrate for conjugation and oxidative stress specifically induces the formation of UBL-protein conjugates. The chain is Ubiquitin-related modifier 1 from Candida glabrata (strain ATCC 2001 / BCRC 20586 / JCM 3761 / NBRC 0622 / NRRL Y-65 / CBS 138) (Yeast).